The primary structure comprises 98 residues: Cell division topological specificity factor (98 aa).

It belongs to the MinE family.

Functionally, prevents the cell division inhibition by proteins MinC and MinD at internal division sites while permitting inhibition at polar sites. This ensures cell division at the proper site by restricting the formation of a division septum at the midpoint of the long axis of the cell. The chain is Cell division topological specificity factor from Nitrosomonas europaea (strain ATCC 19718 / CIP 103999 / KCTC 2705 / NBRC 14298).